The sequence spans 299 residues: GTPase Era (299 aa).

The Era-type G domain maps to 5–175 (RSGFVCFVGR…TNVLVSQLPP (171 aa)). Positions 13-20 (GRPNTGKS) are G1. 13–20 (GRPNTGKS) contacts GTP. The G2 stretch occupies residues 39-43 (QTTRH). Positions 60–63 (DTPG) are G3. Residues 60–64 (DTPGL) and 124–127 (TKID) each bind GTP. Residues 124–127 (TKID) form a G4 region. The tract at residues 154 to 156 (VSA) is G5. One can recognise a KH type-2 domain in the interval 206-285 (VRDELPHSLA…YLDLRVKIAK (80 aa)).

The protein belongs to the TRAFAC class TrmE-Era-EngA-EngB-Septin-like GTPase superfamily. Era GTPase family. As to quaternary structure, monomer. Stays in the monomer conformation, irrespective of the presence of GTP.

It is found in the cell envelope. Its subcellular location is the secreted. The protein resides in the cell wall. Its activity is regulated as follows. Co-purified with RNA upon overexpression in E.coli, but RNAs do not appear to influence the GTPase activity. Exhibits GTPase activity. Binds RNA but is probably not involved in ribosome assembly in mycobacteria. Cannot use ATP. The protein is GTPase Era of Mycolicibacterium smegmatis (strain ATCC 700084 / mc(2)155) (Mycobacterium smegmatis).